The primary structure comprises 1008 residues: Serine/threonine-protein kinase PRP4 homolog (1008 aa).

Residues 1–103 form a disordered region; that stretch reads MAAAEAPSLR…PAKRTKLDDL (103 aa). Position 2 is an N-acetylalanine (A2). 4 positions are modified to phosphoserine: S8, S20, S23, and S32. 2 stretches are compositionally biased toward basic residues: residues 39–59 and 67–81; these read KHSR…KHKH and RKHK…HKRK. A compositionally biased stretch (basic and acidic residues) spans 82-91; it reads EVADASDKEG. Residues S87 and S93 each carry the phosphoserine modification. K99 is modified (N6-acetyllysine; alternate). Residue K99 forms a Glycyl lysine isopeptide (Lys-Gly) (interchain with G-Cter in SUMO2); alternate linkage. K111 is covalently cross-linked (Glycyl lysine isopeptide (Lys-Gly) (interchain with G-Cter in SUMO2)). K117 is covalently cross-linked (Glycyl lysine isopeptide (Lys-Gly) (interchain with G-Cter in SUMO2); alternate). K117 is covalently cross-linked (Glycyl lysine isopeptide (Lys-Gly) (interchain with G-Cter in SUMO1); alternate). Position 131 is a phosphoserine (S131). Y140 carries the post-translational modification Phosphotyrosine. Disordered stretches follow at residues 140 to 536 and 560 to 584; these read YESG…EDEE and SNLS…SPDD. Residues S142, S144, and S166 each carry the phosphoserine modification. Residues 157–168 show a composition bias toward low complexity; sequence GNRSSTRSSSTK. Glycyl lysine isopeptide (Lys-Gly) (interchain with G-Cter in SUMO2) cross-links involve residues K170 and K177. 2 stretches are compositionally biased toward basic residues: residues 179-202 and 214-230; these read STKK…KKSK and RSKS…SKRS. S239, S241, S257, S277, S283, S292, and S294 each carry phosphoserine. Positions 247–270 are enriched in basic and acidic residues; that stretch reads RSQEKVGKARSPVDDKAKVEDKSK. Residues 302 to 315 are compositionally biased toward basic residues; the sequence is SKDRRSRSKERKSK. Residues 316–325 are compositionally biased toward basic and acidic residues; the sequence is RPEADKEKKP. Phosphoserine occurs at positions 328, 354, 356, 366, and 368. Residues 342–367 are compositionally biased toward basic residues; the sequence is PSRRPGRSPKRRSLSPKQRDKSRRSR. Residue T385 is modified to Phosphothreonine. The residue at position 387 (S387) is a Phosphoserine. 2 stretches are compositionally biased toward basic and acidic residues: residues 395-408 and 415-429; these read RSLE…ERRR and RPRD…RSKD. A phosphoserine mark is found at S427, S431, and S437. The segment covering 438 to 498 has biased composition (basic residues); the sequence is PARRRASRSP…RGGRRRRSRS (61 aa). Phosphoserine is present on residues S519, S520, S521, S566, S570, S577, S579, and S581. Residues 519 to 536 show a composition bias toward acidic residues; that stretch reads SSSDDNLEDFDVEEEDEE. Positions 563–582 are enriched in low complexity; the sequence is SVPSEPSSPQSSTRSRSPSP. Glycyl lysine isopeptide (Lys-Gly) (interchain with G-Cter in SUMO2) cross-links involve residues K594 and K660. The Protein kinase domain occupies 688–1004; sequence YNVYGYTGQG…INQALQHAFI (317 aa). ATP-binding positions include 694-702 and K718; that span reads TGQGVFSNV. The residue at position 718 (K718) is an N6-acetyllysine. The active-site Proton acceptor is D816. Y850 is modified (phosphotyrosine). Residue S853 is modified to Phosphoserine.

This sequence belongs to the protein kinase superfamily. CMGC Ser/Thr protein kinase family. In terms of assembly, interacts with CLK1 C-terminus. Associates with the U5 snRNP and NCOR1 deacetylase complexes. Identified in the spliceosome C complex. Post-translationally, phosphorylated by CLK1. Autophosphorylated; phosphorylation inhibits interaction with its targets, such as PRPF6 or SMARCA4.

Its subcellular location is the nucleus. The protein resides in the chromosome. It is found in the centromere. It localises to the kinetochore. The catalysed reaction is L-seryl-[protein] + ATP = O-phospho-L-seryl-[protein] + ADP + H(+). It carries out the reaction L-threonyl-[protein] + ATP = O-phospho-L-threonyl-[protein] + ADP + H(+). Its function is as follows. Serine/threonine kinase involved in spliceosomal assembly as well as mitosis and signaling regulation. Connects chromatin mediated regulation of transcription and pre-mRNA splicing. During spliceosomal assembly, interacts with and phosphorylates PRPF6 and PRPF31, components of the U4/U6-U5 tri-small nuclear ribonucleoprotein (snRNP), to facilitate the formation of the spliceosome B complex. Plays a role in regulating transcription and the spindle assembly checkpoint (SAC). Associates with U5 snRNP and NCOR1 deacetylase complexes which may allow a coordination of pre-mRNA splicing with chromatin remodeling events involved in transcriptional regulation. Associates and probably phosphorylates SMARCA4 and NCOR1. Phosphorylates SRSF1. Associates with kinetochores during mitosis and is necessary for recruitment and maintenance of the checkpoint proteins such as MAD1L1 and MAD12L1 at the kinetochores. Phosphorylates and regulates the activity of the transcription factors such as ELK1 and KLF13. Phosphorylates nuclear YAP1 and WWTR1/TAZ which induces nuclear exclusion and regulates Hippo signaling pathway, involved in tissue growth control. In Bos taurus (Bovine), this protein is Serine/threonine-protein kinase PRP4 homolog (PRP4K).